A 276-amino-acid polypeptide reads, in one-letter code: Large ribosomal subunit protein uL2 (276 aa).

Residues 225 to 276 (VMNPVDHPHGGGEGKTAAGRDPVSPWGTPTKGYRTRSNKRTDSMIVQKRHKR) are disordered.

It belongs to the universal ribosomal protein uL2 family. In terms of assembly, part of the 50S ribosomal subunit. Forms a bridge to the 30S subunit in the 70S ribosome.

Its function is as follows. One of the primary rRNA binding proteins. Required for association of the 30S and 50S subunits to form the 70S ribosome, for tRNA binding and peptide bond formation. It has been suggested to have peptidyltransferase activity; this is somewhat controversial. Makes several contacts with the 16S rRNA in the 70S ribosome. The chain is Large ribosomal subunit protein uL2 from Cupriavidus taiwanensis (strain DSM 17343 / BCRC 17206 / CCUG 44338 / CIP 107171 / LMG 19424 / R1) (Ralstonia taiwanensis (strain LMG 19424)).